A 257-amino-acid polypeptide reads, in one-letter code: Imidazole glycerol phosphate synthase subunit HisF (257 aa).

Catalysis depends on residues Asp11 and Asp130.

It belongs to the HisA/HisF family. As to quaternary structure, heterodimer of HisH and HisF.

The protein resides in the cytoplasm. The enzyme catalyses 5-[(5-phospho-1-deoxy-D-ribulos-1-ylimino)methylamino]-1-(5-phospho-beta-D-ribosyl)imidazole-4-carboxamide + L-glutamine = D-erythro-1-(imidazol-4-yl)glycerol 3-phosphate + 5-amino-1-(5-phospho-beta-D-ribosyl)imidazole-4-carboxamide + L-glutamate + H(+). It participates in amino-acid biosynthesis; L-histidine biosynthesis; L-histidine from 5-phospho-alpha-D-ribose 1-diphosphate: step 5/9. IGPS catalyzes the conversion of PRFAR and glutamine to IGP, AICAR and glutamate. The HisF subunit catalyzes the cyclization activity that produces IGP and AICAR from PRFAR using the ammonia provided by the HisH subunit. The sequence is that of Imidazole glycerol phosphate synthase subunit HisF from Shewanella denitrificans (strain OS217 / ATCC BAA-1090 / DSM 15013).